Consider the following 137-residue polypeptide: Flagellar basal body rod protein FlgB (137 aa).

The protein belongs to the flagella basal body rod proteins family. In terms of assembly, the basal body constitutes a major portion of the flagellar organelle and consists of a number of rings mounted on a central rod. In Gram-negative bacteria, at least four rings, L, P, S and M are present, whereas Gram-positive bacteria lack the L and P rings. The rod consists of about 26 subunits of FlgG in the distal portion, and FlgB, FlgC and FlgF build up the proximal portion of the rod with about 6 subunits each. Rod assembly occurs by export via the flagellum-specific pathway of its constituent proteins and by their incorporation into the rod structure in the probable order of FlgB, FlgC, FlgF and FlgG. Another protein, FliE, also assembles onto the stable rod structure.

It is found in the bacterial flagellum basal body. Functionally, structural component of flagellum, the bacterial motility apparatus. Part of the rod structure of flagellar basal body. The protein is Flagellar basal body rod protein FlgB of Proteus mirabilis (strain HI4320).